The following is a 452-amino-acid chain: Keratin, type I cytoskeletal 42 (452 aa).

The interval 4–93 (TTSVRQFSTS…GVSDALLGGS (90 aa)) is head. The segment at 94-129 (EKETMQNLNDRLATYLDRVRALEEANADLEVKIREW) is coil 1A. The region spanning 94–405 (EKETMQNLND…RLLEGEDAHL (312 aa)) is the IF rod domain. The interval 130-147 (YKKQGPGPARDYSPYFKT) is linker 1. Residues 148–239 (IEDLRNKILA…KNHEEEMNAL (92 aa)) form a coil 1B region. Residues 240-262 (RGQVGGDVNVEMDAAPGVDLSRI) are linker 12. Positions 263 to 401 (LNEMRDQYEK…ATYRRLLEGE (139 aa)) are coil 2. The interval 402-452 (DAHLATQYSSSLASQPSREGMVTSRQVRTIVEEVQDGKVVSSREQVHRSTH) is tail.

Belongs to the intermediate filament family. In terms of assembly, heterodimer of a type I and a type II keratin. Colocalizes with KRT8/KRT18 filament network. In terms of tissue distribution, expressed in nail matrix and nail bed epithelium (at protein level). Also expressed in tongue and digits with weak expression in vibrissae and in both filiform and fungiform papillae of oral mucosa.

The protein resides in the cytoplasm. The polypeptide is Keratin, type I cytoskeletal 42 (Mus musculus (Mouse)).